We begin with the raw amino-acid sequence, 965 residues long: Aminopeptidase N (965 aa).

The Cytoplasmic portion of the chain corresponds to M1–S8. Residues K9 to V32 form a helical; Signal-anchor for type II membrane protein membrane-spanning segment. The segment at Y33–S65 is cytosolic Ser/Thr-rich junction. Residues Y33–S965 are Extracellular-facing. Residues N40–S65 form a disordered region. Positions G44 to T61 are enriched in low complexity. Residues K66–S965 form a metalloprotease region. N-linked (GlcNAc...) asparagine glycosylation is present at N125. Y173 carries the post-translational modification Sulfotyrosine. Residues N231, N260, and N316 are each glycosylated (N-linked (GlcNAc...) asparagine). Residue G349–N353 coordinates substrate. H385 contacts Zn(2+). E386 (proton acceptor) is an active-site residue. Zn(2+) is bound by residues H389 and E408. Y416 is modified (sulfotyrosine). N-linked (GlcNAc...) asparagine glycosylation is found at N508, N569, N624, N680, N734, and N738. 2 disulfides stabilise this stretch: C760/C767 and C797/C833.

It belongs to the peptidase M1 family. In terms of assembly, homodimer. Interacts with SLC6A19. The cofactor is Zn(2+). Post-translationally, sulfated. In terms of processing, N- and O-glycosylated. May undergo proteolysis and give rise to a soluble form.

The protein localises to the cell membrane. The enzyme catalyses Release of an N-terminal amino acid, Xaa-|-Yaa- from a peptide, amide or arylamide. Xaa is preferably Ala, but may be most amino acids including Pro (slow action). When a terminal hydrophobic residue is followed by a prolyl residue, the two may be released as an intact Xaa-Pro dipeptide.. In terms of biological role, broad specificity aminopeptidase which plays a role in the final digestion of peptides generated from hydrolysis of proteins by gastric and pancreatic proteases. Also involved in the processing of various peptides including peptide hormones, such as angiotensin III and IV, neuropeptides, and chemokines. May also be involved the cleavage of peptides bound to major histocompatibility complex class II molecules of antigen presenting cells. May have a role in angiogenesis and promote cholesterol crystallization. May have a role in amino acid transport by acting as binding partner of amino acid transporter SLC6A19 and regulating its activity. The chain is Aminopeptidase N (ANPEP) from Bos taurus (Bovine).